Here is a 264-residue protein sequence, read N- to C-terminus: Large ribosomal subunit protein mL50 (264 aa).

The N-terminal 75 residues, 1–75, are a transit peptide targeting the mitochondrion; it reads MSSLLKLHCI…EEGTNEASSQ (75 aa).

Belongs to the mitochondrion-specific ribosomal protein mL50 family. Component of the mitochondrial large ribosomal subunit (mt-LSU). Mature yeast 74S mitochondrial ribosomes consist of a small (37S) and a large (54S) subunit. The 37S small subunit contains a 15S ribosomal RNA (15S mt-rRNA) and 34 different proteins. The 54S large subunit contains a 21S rRNA (21S mt-rRNA) and 46 different proteins.

The protein resides in the mitochondrion. In terms of biological role, component of the mitochondrial ribosome (mitoribosome), a dedicated translation machinery responsible for the synthesis of mitochondrial genome-encoded proteins, including at least some of the essential transmembrane subunits of the mitochondrial respiratory chain. The mitoribosomes are attached to the mitochondrial inner membrane and translation products are cotranslationally integrated into the membrane. The polypeptide is Large ribosomal subunit protein mL50 (MRPL13) (Saccharomyces cerevisiae (strain ATCC 204508 / S288c) (Baker's yeast)).